We begin with the raw amino-acid sequence, 219 residues long: 7-cyano-7-deazaguanine synthase (219 aa).

10–20 (FSGGQDSTTCL) is an ATP binding site. The Zn(2+) site is built by cysteine 188, cysteine 197, cysteine 200, and cysteine 203.

Belongs to the QueC family. In terms of assembly, homodimer. Zn(2+) serves as cofactor.

It catalyses the reaction 7-carboxy-7-deazaguanine + NH4(+) + ATP = 7-cyano-7-deazaguanine + ADP + phosphate + H2O + H(+). It participates in purine metabolism; 7-cyano-7-deazaguanine biosynthesis. Its function is as follows. Catalyzes the ATP-dependent conversion of 7-carboxy-7-deazaguanine (CDG) to 7-cyano-7-deazaguanine (preQ(0)). The chain is 7-cyano-7-deazaguanine synthase from Clostridium botulinum (strain 657 / Type Ba4).